A 185-amino-acid chain; its full sequence is Peptidoglycan-recognition protein SC1a (185 aa).

Positions 1 to 21 (MVSKVALLLAVLVCSQYMAQG) are cleaved as a signal peptide. The region spanning 46-170 (SYAIIHHTAG…RQVSATECPG (125 aa)) is the N-acetylmuramoyl-L-alanine amidase domain. H51 is a binding site for Zn(2+). An intrachain disulfide couples C58 to C64. Positions 160 and 168 each coordinate Zn(2+).

This sequence belongs to the N-acetylmuramoyl-L-alanine amidase 2 family. Zn(2+) is required as a cofactor.

It is found in the secreted. It carries out the reaction Hydrolyzes the link between N-acetylmuramoyl residues and L-amino acid residues in certain cell-wall glycopeptides.. In terms of biological role, N-acetylmuramyl-L-alanine amidase involved in innate immunity by degrading bacterial peptidoglycans (PGN). Plays a scavenger role by digesting biologically active PGN into biologically inactive fragments. Has no direct bacteriolytic activity. The polypeptide is Peptidoglycan-recognition protein SC1a (Drosophila melanogaster (Fruit fly)).